The primary structure comprises 167 residues: Type IV major pilin protein PilE (167 aa).

Positions 1 to 7 (MNTLQKG) are cleaved as a propeptide — leader sequence. N-methylphenylalanine is present on Phe8. A helical membrane pass occupies residues 8 to 28 (FTLIELMIVIAIVGILAAVAL). An O-linked (GlcNAc...) serine glycan is attached at Ser70. Cys127 and Cys160 are joined by a disulfide.

It belongs to the N-Me-Phe pilin family. As to quaternary structure, the pili are polar flexible filaments of about 5.4 nanometers diameter and 2.5 micrometers average length; they consist of only a single polypeptide chain arranged in a helical configuration of five subunits per turn in the assembled pilus.

It is found in the fimbrium. It localises to the membrane. Major component of the type IV pilus (T4P) that plays a role in cellular adherence, microcolony formation, resistance to neutrophil mediated killing, twitching motility as well as transformation. Mediates the attachment and the formation of bacterial microcolonies on host epithelial cells. Mechanistically, pili retractation induces host NF-kappa-B activation in infected cells, which is temporally associated with the formation of gonococcal microcolonies. This is Type IV major pilin protein PilE (pilE) from Neisseria gonorrhoeae.